A 468-amino-acid chain; its full sequence is Nuclear pore complex protein Nup50 (468 aa).

Basic and acidic residues predominate over residues methionine 1–aspartate 16. The segment at methionine 1–threonine 26 is disordered. Alanine 2 is subject to N-acetylalanine. The residue at position 8 (lysine 8) is an N6-acetyllysine. At serine 52 the chain carries Phosphoserine. Repeat 1 spans residues phenylalanine 76–glycine 77. The interval phenylalanine 76–glycine 304 is 5 X 2 AA repeats of F-G. Lysine 83 is subject to N6-acetyllysine. Residues phenylalanine 113 to glycine 114 form repeat 2. Disordered stretches follow at residues threonine 122–serine 148 and histidine 201–leucine 224. Lysine 127 is subject to N6-acetyllysine. A compositionally biased stretch (low complexity) spans serine 137–serine 148. The tract at residues glycine 144–arginine 206 is binding to CDKN1B. Phosphoserine occurs at positions 208 and 221. The stretch at phenylalanine 225–glycine 226 is repeat 3. Serine 234 carries the post-translational modification Phosphoserine. Residues phenylalanine 238 to alanine 269 form a disordered region. The segment covering asparagine 241–aspartate 260 has biased composition (basic and acidic residues). Threonine 246 and threonine 259 each carry phosphothreonine. Position 270 is a phosphoserine (serine 270). Copy 4 of the repeat occupies phenylalanine 273 to glycine 274. Residue serine 296 is modified to Phosphoserine. Repeat unit 5 spans residues phenylalanine 303–glycine 304. Over residues glycine 304–phenylalanine 317 the composition is skewed to polar residues. The tract at residues glycine 304–proline 345 is disordered. Residues glycine 335–alanine 468 form the RanBD1 domain. Lysine 353 participates in a covalent cross-link: Glycyl lysine isopeptide (Lys-Gly) (interchain with G-Cter in SUMO2). The residue at position 450 (lysine 450) is an N6-acetyllysine.

In terms of assembly, interacts with Importin alpha-2, Importin beta, Importin beta-2, NUP153, Ran binding protein 7, CDKN1B and itself. Does not interact with TPR. In terms of tissue distribution, ubiquitous. Highest levels in testis, peripheral blood leukocytes and fetal liver.

The protein localises to the nucleus. The protein resides in the nuclear pore complex. Its subcellular location is the nucleus membrane. Its function is as follows. Component of the nuclear pore complex that has a direct role in nuclear protein import. Actively displaces NLSs from importin-alpha, and facilitates disassembly of the importin-alpha:beta-cargo complex and importin recycling. Interacts with regulatory proteins of cell cycle progression including CDKN1B. This interaction is required for correct intracellular transport and degradation of CDKN1B. This Homo sapiens (Human) protein is Nuclear pore complex protein Nup50 (NUP50).